Reading from the N-terminus, the 213-residue chain is 3-isopropylmalate dehydratase small subunit (213 aa).

The protein belongs to the LeuD family. LeuD type 1 subfamily. Heterodimer of LeuC and LeuD.

The enzyme catalyses (2R,3S)-3-isopropylmalate = (2S)-2-isopropylmalate. It participates in amino-acid biosynthesis; L-leucine biosynthesis; L-leucine from 3-methyl-2-oxobutanoate: step 2/4. Functionally, catalyzes the isomerization between 2-isopropylmalate and 3-isopropylmalate, via the formation of 2-isopropylmaleate. The polypeptide is 3-isopropylmalate dehydratase small subunit (Neisseria meningitidis serogroup B (strain ATCC BAA-335 / MC58)).